The sequence spans 289 residues: Enoyl-CoA delta isomerase 1, mitochondrial (289 aa).

A mitochondrion-targeting transit peptide spans 1 to 28 (MALAAARRVLLQAGSRLGRRGAVDGARR). K48 carries the post-translational modification N6-acetyllysine; alternate. An N6-succinyllysine; alternate modification is found at K48. N6-succinyllysine is present on K71. The residue at position 76 (K76) is an N6-acetyllysine. Residues 93-97 (AGLDL), G140, and N164 contribute to the substrate site. K222, K229, and K255 each carry N6-acetyllysine; alternate. 3 positions are modified to N6-succinyllysine; alternate: K222, K229, and K255. Position 275 is an N6-succinyllysine (K275). At K283 the chain carries N6-acetyllysine; alternate. K283 carries the N6-succinyllysine; alternate modification.

Belongs to the enoyl-CoA hydratase/isomerase family. In terms of assembly, homotrimer.

The protein resides in the mitochondrion matrix. It carries out the reaction a (3Z)-enoyl-CoA = a 4-saturated (2E)-enoyl-CoA. The enzyme catalyses a (3E)-enoyl-CoA = a 4-saturated (2E)-enoyl-CoA. The catalysed reaction is (3Z)-octenoyl-CoA = (2E)-octenoyl-CoA. It catalyses the reaction (2E)-tetradecenoyl-CoA = (3Z)-tetradecenoyl-CoA. It carries out the reaction (3Z)-dodecenoyl-CoA = (2E)-dodecenoyl-CoA. The enzyme catalyses (3Z)-hexenoyl-CoA = (2E)-hexenoyl-CoA. The catalysed reaction is (3Z)-decenoyl-CoA = (2E)-decenoyl-CoA. The protein operates within lipid metabolism; fatty acid beta-oxidation. Key enzyme of fatty acid beta-oxidation. Able to isomerize both 3-cis (3Z) and 3-trans (3E) double bonds into the 2-trans (2E) form in a range of enoyl-CoA species, with a preference for (3Z)-enoyl-CoAs over (3E)-enoyl-CoAs. The catalytic efficiency of this enzyme is not affected by the fatty acyl chain length. The chain is Enoyl-CoA delta isomerase 1, mitochondrial from Rattus norvegicus (Rat).